Reading from the N-terminus, the 472-residue chain is Probable dipeptidase A (472 aa).

Residue C10 is part of the active site.

This sequence belongs to the peptidase C69 family.

The catalysed reaction is an L-aminoacyl-L-amino acid + H2O = 2 an L-alpha-amino acid. The chain is Probable dipeptidase A (pepDA) from Streptococcus pyogenes serotype M1.